The chain runs to 356 residues: ATP-dependent 6-phosphofructokinase (356 aa).

ATP is bound by residues Gly15, 78–79 (KG), and 115–118 (GEGT). Glu116 is a binding site for Mg(2+). Substrate is bound by residues 138 to 140 (TID), Arg175, 182 to 184 (MGR), Glu235, Arg272, and 278 to 281 (HLQR). Asp140 acts as the Proton acceptor in catalysis.

This sequence belongs to the phosphofructokinase type A (PFKA) family. Mixed-substrate PFK group III subfamily. Homodimer or homotetramer. Requires Mg(2+) as cofactor.

The protein localises to the cytoplasm. The enzyme catalyses beta-D-fructose 6-phosphate + ATP = beta-D-fructose 1,6-bisphosphate + ADP + H(+). The protein operates within carbohydrate degradation; glycolysis; D-glyceraldehyde 3-phosphate and glycerone phosphate from D-glucose: step 3/4. In terms of biological role, catalyzes the phosphorylation of D-fructose 6-phosphate to fructose 1,6-bisphosphate by ATP, the first committing step of glycolysis. The protein is ATP-dependent 6-phosphofructokinase of Chloroflexus aggregans (strain MD-66 / DSM 9485).